Reading from the N-terminus, the 182-residue chain is NAD(P)H-quinone oxidoreductase subunit I, chloroplastic (182 aa).

4Fe-4S ferredoxin-type domains are found at residues 55–84 (GRIH…VDWK) and 95–124 (LNYS…MTEE). [4Fe-4S] cluster-binding residues include C64, C67, C70, C74, C104, C107, C110, and C114.

The protein belongs to the complex I 23 kDa subunit family. NDH is composed of at least 16 different subunits, 5 of which are encoded in the nucleus. The cofactor is [4Fe-4S] cluster.

It is found in the plastid. The protein localises to the chloroplast thylakoid membrane. The catalysed reaction is a plastoquinone + NADH + (n+1) H(+)(in) = a plastoquinol + NAD(+) + n H(+)(out). It catalyses the reaction a plastoquinone + NADPH + (n+1) H(+)(in) = a plastoquinol + NADP(+) + n H(+)(out). Functionally, NDH shuttles electrons from NAD(P)H:plastoquinone, via FMN and iron-sulfur (Fe-S) centers, to quinones in the photosynthetic chain and possibly in a chloroplast respiratory chain. The immediate electron acceptor for the enzyme in this species is believed to be plastoquinone. Couples the redox reaction to proton translocation, and thus conserves the redox energy in a proton gradient. This Buxus microphylla (Littleleaf boxwood) protein is NAD(P)H-quinone oxidoreductase subunit I, chloroplastic.